Here is a 229-residue protein sequence, read N- to C-terminus: PKHD-type hydroxylase BBta_3541 (229 aa).

Residues 78-180 (QIFPPLFNRY…RVASFFWMQS (103 aa)) form the Fe2OG dioxygenase domain. 3 residues coordinate Fe cation: histidine 98, aspartate 100, and histidine 161. Arginine 171 lines the 2-oxoglutarate pocket.

The cofactor is Fe(2+). It depends on L-ascorbate as a cofactor.

The polypeptide is PKHD-type hydroxylase BBta_3541 (Bradyrhizobium sp. (strain BTAi1 / ATCC BAA-1182)).